The chain runs to 540 residues: Keratin, type II cytoskeletal 73 (540 aa).

The interval M1–Q131 is head. The tract at residues E132–L167 is coil 1A. Positions E132–M445 constitute an IF rod domain. Positions Q168 to Y186 are linker 1. A coil 1B region spans residues I187–M278. The segment at Q279 to I302 is linker 12. Positions I303–E441 are coil 2. The segment at E442–R540 is tail. The segment at G509 to R540 is disordered. The segment covering A530–R540 has biased composition (polar residues).

This sequence belongs to the intermediate filament family. Heterotetramer of two type I and two type II keratins.

In terms of biological role, has a role in hair formation. Specific component of keratin intermediate filaments in the inner root sheath (IRS) of the hair follicle. This Bos taurus (Bovine) protein is Keratin, type II cytoskeletal 73 (KRT73).